We begin with the raw amino-acid sequence, 435 residues long: Astacin-like metalloendopeptidase (435 aa).

Positions 1–23 (MGIMGSLWPWILTMLSLLGLSMG) are cleaved as a signal peptide. A Peptidase M12A domain is found at 85 to 282 (RLLSVTNNKW…TRVCRLYNCS (198 aa)). Intrachain disulfides connect Cys-132-Cys-281 and Cys-153-Cys-172. His-182 contributes to the Zn(2+) binding site. Residue Glu-183 is part of the active site. The Zn(2+) site is built by His-186 and His-192. A compositionally biased stretch (low complexity) spans 318–329 (SEESGSSAPSGS). The interval 318–356 (SEESGSSAPSGSRTGGQSIAGLGNSQQGWEHPPQSTFSV) is disordered. Positions 340 to 355 (GNSQQGWEHPPQSTFS) are enriched in polar residues.

Interacts (via N-terminal domain) with SPACA3; the interaction occurs during fertilization. The cofactor is Zn(2+). As to expression, ovary-specific. Expressed in secondary, antral and Graafian follicle oocytes. Expressed in the egg cells. Not detected in two-cell embryos. Not detected in naked oocytes, oocytes in primordial or unilaminar primary follicles, or in any other ovarian cells at pre-pubertal, pubertal or adult stages (at protein level). Ovary-specific.

The protein localises to the cytoplasm. Its subcellular location is the cell membrane. It localises to the cytoplasmic vesicle. It is found in the secretory vesicle. The protein resides in the cortical granule. Inhibited by wide spectrum metalloproteinase inhibitor batimastat (BB-94). Also inhibited by EDTA. In terms of biological role, oocyte-specific oolemmal receptor involved in sperm and egg adhesion and fertilization. Plays a role in the polyspermy inhibition. Probably acts as a protease for the post-fertilization cleavage of ZP2. Cleaves the sperm-binding ZP2 at the surface of the zona pellucida after fertilization and cortical granule exocytosis, rendering the zona pellucida unable to support further sperm binding. The chain is Astacin-like metalloendopeptidase from Mus musculus (Mouse).